A 534-amino-acid polypeptide reads, in one-letter code: ATP synthase subunit alpha (534 aa).

Residue 170-177 (GDRQTGKT) participates in ATP binding. The segment at 505–534 (HEDARVKSETAQAAGKDKDEKAAATAGAGK) is disordered.

Belongs to the ATPase alpha/beta chains family. F-type ATPases have 2 components, CF(1) - the catalytic core - and CF(0) - the membrane proton channel. CF(1) has five subunits: alpha(3), beta(3), gamma(1), delta(1), epsilon(1). CF(0) has three main subunits: a(1), b(2) and c(9-12). The alpha and beta chains form an alternating ring which encloses part of the gamma chain. CF(1) is attached to CF(0) by a central stalk formed by the gamma and epsilon chains, while a peripheral stalk is formed by the delta and b chains.

It is found in the cell inner membrane. The enzyme catalyses ATP + H2O + 4 H(+)(in) = ADP + phosphate + 5 H(+)(out). Produces ATP from ADP in the presence of a proton gradient across the membrane. The alpha chain is a regulatory subunit. The chain is ATP synthase subunit alpha from Acidobacterium capsulatum (strain ATCC 51196 / DSM 11244 / BCRC 80197 / JCM 7670 / NBRC 15755 / NCIMB 13165 / 161).